Consider the following 175-residue polypeptide: MSGKELNKIVAAILFASLIAMMVGFVANILYKPTLELQHRGYSVAVQESSENQNTTALEQAPVNIPELMKTANADNGREIAKKCLMCHSLDKDGPNKLGPHLWDVTGRPKASIADYKYSPALSKLGGVWDDDSLFAFLHKPSSYAPGTKMSFAGISKPQDIADVILFLKTYVHDK.

At 1 to 8 (MSGKELNK) the chain is on the cytoplasmic side. Residues 9–29 (IVAAILFASLIAMMVGFVANI) traverse the membrane as a helical; Signal-anchor segment. Residues 30-175 (LYKPTLELQH…LFLKTYVHDK (146 aa)) lie on the Periplasmic side of the membrane. 4 residues coordinate heme c: cysteine 84, cysteine 87, histidine 88, and methionine 150.

This sequence belongs to the cytochrome c family. In terms of processing, binds 1 heme c group covalently per subunit.

It localises to the cell membrane. In terms of biological role, may be involved in electron transfer from bc1 complex to aa3. The polypeptide is Cytochrome c homolog (cycM) (Rickettsia conorii (strain ATCC VR-613 / Malish 7)).